A 314-amino-acid chain; its full sequence is Protein phosphatase PTC7 homolog fig (314 aa).

The PPM-type phosphatase domain occupies 43–309 (PYLVTVVQGR…DDITLILSSV (267 aa)). Positions 87, 88, and 232 each coordinate Mn(2+).

The protein belongs to the PP2C family. Mg(2+) is required as a cofactor. Mn(2+) serves as cofactor.

The catalysed reaction is O-phospho-L-seryl-[protein] + H2O = L-seryl-[protein] + phosphate. It carries out the reaction O-phospho-L-threonyl-[protein] + H2O = L-threonyl-[protein] + phosphate. The sequence is that of Protein phosphatase PTC7 homolog fig from Drosophila sechellia (Fruit fly).